The sequence spans 259 residues: Uridylate kinase (259 aa).

ATP is bound at residue 10 to 13 (KLSG). Glycine 52 contributes to the UMP binding site. ATP is bound by residues glycine 53 and arginine 57. UMP is bound by residues aspartate 72 and 134–141 (NGQPFLTT). ATP contacts are provided by tyrosine 168 and aspartate 171. The tract at residues 236-259 (ISSSPEKSEEFGNEVLASPAESTA) is disordered.

It belongs to the UMP kinase family. Homohexamer.

The protein resides in the cytoplasm. The enzyme catalyses UMP + ATP = UDP + ADP. The protein operates within pyrimidine metabolism; CTP biosynthesis via de novo pathway; UDP from UMP (UMPK route): step 1/1. Inhibited by UTP. Functionally, catalyzes the reversible phosphorylation of UMP to UDP. In Frankia casuarinae (strain DSM 45818 / CECT 9043 / HFP020203 / CcI3), this protein is Uridylate kinase.